We begin with the raw amino-acid sequence, 557 residues long: Potassium-transporting ATPase potassium-binding subunit (557 aa).

Transmembrane regions (helical) follow at residues 1–21, 62–82, 132–152, 176–196, 253–273, 279–299, 371–391, 415–435, 482–502, and 528–548; these read MEIL…IPIG, QYIF…YIIL, IVIT…ALAF, ILLP…VPQT, VQII…GHMI, AVAI…ICFS, IFGG…LTVF, LVAF…ALAL, VSAG…LLAV, and VTLI…AVAL.

This sequence belongs to the KdpA family. The system is composed of three essential subunits: KdpA, KdpB and KdpC.

It is found in the cell membrane. In terms of biological role, part of the high-affinity ATP-driven potassium transport (or Kdp) system, which catalyzes the hydrolysis of ATP coupled with the electrogenic transport of potassium into the cytoplasm. This subunit binds the extracellular potassium ions and delivers the ions to the membrane domain of KdpB through an intramembrane tunnel. This Clostridium acetobutylicum (strain ATCC 824 / DSM 792 / JCM 1419 / IAM 19013 / LMG 5710 / NBRC 13948 / NRRL B-527 / VKM B-1787 / 2291 / W) protein is Potassium-transporting ATPase potassium-binding subunit.